The primary structure comprises 133 residues: Small ribosomal subunit protein uS19 (133 aa).

The protein belongs to the universal ribosomal protein uS19 family.

In terms of biological role, protein S19 forms a complex with S13 that binds strongly to the 16S ribosomal RNA. In Thermococcus sibiricus (strain DSM 12597 / MM 739), this protein is Small ribosomal subunit protein uS19.